Here is a 359-residue protein sequence, read N- to C-terminus: Photosystem II protein D1 1 (359 aa).

The next 3 membrane-spanning stretches (helical) occupy residues 29-46 (YVGW…AATT), 118-133 (HFLI…EWEL), and 142-156 (WICI…AASA). His-118 contributes to the chlorophyll a binding site. Tyr-126 provides a ligand contact to pheophytin a. [CaMn4O5] cluster-binding residues include Asp-170 and Glu-189. The helical transmembrane segment at 197-218 (FHMLGVAGVFGGSLFSAMHGSL) threads the bilayer. Residue His-198 participates in chlorophyll a binding. A quinone contacts are provided by residues His-215 and 264 to 265 (SF). His-215 contacts Fe cation. His-272 is a Fe cation binding site. A helical transmembrane segment spans residues 274–288 (FLAAWPVVGIWFTAL). [CaMn4O5] cluster is bound by residues His-332, Glu-333, Asp-342, and Ala-344. A propeptide spanning residues 345–359 (AAESAPVALQAPAIG) is cleaved from the precursor.

The protein belongs to the reaction center PufL/M/PsbA/D family. PSII is composed of 1 copy each of membrane proteins PsbA, PsbB, PsbC, PsbD, PsbE, PsbF, PsbH, PsbI, PsbJ, PsbK, PsbL, PsbM, PsbT, PsbX, PsbY, PsbZ, Psb30/Ycf12, peripheral proteins PsbO, CyanoQ (PsbQ), PsbU, PsbV and a large number of cofactors. It forms dimeric complexes. The D1/D2 heterodimer binds P680, chlorophylls that are the primary electron donor of PSII, and subsequent electron acceptors. It shares a non-heme iron and each subunit binds pheophytin, quinone, additional chlorophylls, carotenoids and lipids. D1 provides most of the ligands for the Mn4-Ca-O5 cluster of the oxygen-evolving complex (OEC). There is also a Cl(-1) ion associated with D1 and D2, which is required for oxygen evolution. The PSII complex binds additional chlorophylls, carotenoids and specific lipids. is required as a cofactor. Tyr-161 forms a radical intermediate that is referred to as redox-active TyrZ, YZ or Y-Z. Post-translationally, C-terminally processed by CtpA; processing is essential to allow assembly of the oxygen-evolving complex and thus photosynthetic growth.

The protein localises to the cellular thylakoid membrane. It catalyses the reaction 2 a plastoquinone + 4 hnu + 2 H2O = 2 a plastoquinol + O2. Functionally, photosystem II (PSII) is a light-driven water:plastoquinone oxidoreductase that uses light energy to abstract electrons from H(2)O, generating O(2) and a proton gradient subsequently used for ATP formation. It consists of a core antenna complex that captures photons, and an electron transfer chain that converts photonic excitation into a charge separation. The D1/D2 (PsbA/PsbD) reaction center heterodimer binds P680, the primary electron donor of PSII as well as several subsequent electron acceptors. This Synechococcus sp. (strain RCC307) protein is Photosystem II protein D1 1.